Consider the following 65-residue polypeptide: Large ribosomal subunit protein bL35 (65 aa).

The protein belongs to the bacterial ribosomal protein bL35 family.

The protein is Large ribosomal subunit protein bL35 of Thiobacillus denitrificans (strain ATCC 25259 / T1).